Here is a 434-residue protein sequence, read N- to C-terminus: Glutamate-1-semialdehyde 2,1-aminomutase 1 (434 aa).

Lys-270 is modified (N6-(pyridoxal phosphate)lysine).

It belongs to the class-III pyridoxal-phosphate-dependent aminotransferase family. HemL subfamily. As to quaternary structure, homodimer. It depends on pyridoxal 5'-phosphate as a cofactor.

Its subcellular location is the cytoplasm. It carries out the reaction (S)-4-amino-5-oxopentanoate = 5-aminolevulinate. It participates in porphyrin-containing compound metabolism; protoporphyrin-IX biosynthesis; 5-aminolevulinate from L-glutamyl-tRNA(Glu): step 2/2. The polypeptide is Glutamate-1-semialdehyde 2,1-aminomutase 1 (Bacillus cereus (strain ATCC 10987 / NRS 248)).